The primary structure comprises 501 residues: ATP synthase subunit alpha (501 aa).

169-176 is an ATP binding site; it reads GDRQTGKT.

It belongs to the ATPase alpha/beta chains family. As to quaternary structure, F-type ATPases have 2 components, CF(1) - the catalytic core - and CF(0) - the membrane proton channel. CF(1) has five subunits: alpha(3), beta(3), gamma(1), delta(1), epsilon(1). CF(0) has three main subunits: a(1), b(2) and c(9-12). The alpha and beta chains form an alternating ring which encloses part of the gamma chain. CF(1) is attached to CF(0) by a central stalk formed by the gamma and epsilon chains, while a peripheral stalk is formed by the delta and b chains.

Its subcellular location is the cell membrane. It carries out the reaction ATP + H2O + 4 H(+)(in) = ADP + phosphate + 5 H(+)(out). Functionally, produces ATP from ADP in the presence of a proton gradient across the membrane. The alpha chain is a regulatory subunit. This is ATP synthase subunit alpha from Streptococcus agalactiae serotype Ia (strain ATCC 27591 / A909 / CDC SS700).